We begin with the raw amino-acid sequence, 497 residues long: uncharacterized protein (497 aa).

266–273 (GIQGTGKS) serves as a coordination point for ATP.

The protein belongs to the AAA ATPase family. Highly divergent.

It localises to the plastid. The protein resides in the chloroplast. This is an uncharacterized protein from Trieres chinensis (Marine centric diatom).